We begin with the raw amino-acid sequence, 227 residues long: Prolactin (227 aa).

Positions 1–28 (MNIKGSPWKGSLLLLLVSNLLLCQNVAP) are cleaved as a signal peptide. A disulfide bridge connects residues C32 and C39. S54 is modified (phosphoserine). Residue N59 is glycosylated (N-linked (GlcNAc...) asparagine). Phosphoserine occurs at positions 62 and 118. 2 disulfide bridges follow: C86-C202 and C219-C227.

The protein belongs to the somatotropin/prolactin family. Interacts with PRLR.

It localises to the secreted. Functionally, prolactin acts primarily on the mammary gland by promoting lactation. This Macaca mulatta (Rhesus macaque) protein is Prolactin (PRL).